The following is a 318-amino-acid chain: Homeobox protein Nkx-2.5 (318 aa).

The segment at residues 137-196 (RRKPRVLFSQAQVYELERRFKQQRYLSPAERDQLASVLKLTSTQVKIWFQNRRYKCKRQR) is a DNA-binding region (homeobox).

It belongs to the NK-2 homeobox family. Homodimer (via the homeobox); binds DNA as homodimer. Interacts (via the homeobox) with TBX5 (via the T-box); this complex binds DNA. Interacts with HIPK1 and HIPK2, but not HIPK3. Interacts with the C-terminal zinc finger of GATA4 through its homeobox domain. Also interacts with JARID2 which represses its ability to activate transcription of ANF. Interacts with FBLIM1. Interacts with TBX18. Interacts with histone methyltransferase NSD2 (via HMG box). Interacts with NEDD9. Interacts with TBX1.

The protein resides in the nucleus. Functionally, transcription factor required for the development of the heart and the spleen. During heart development, acts as a transcriptional activator of NPPA/ANF in cooperation with GATA4. May cooperate with TBX2 to negatively modulate expression of NPPA/ANF in the atrioventricular canal. Binds to the core DNA motif of NPPA promoter. Together with PBX1, required for spleen development through a mechanism that involves CDKN2B repression. Positively regulates transcription of genes such as COL3A1 and MMP2, resulting in increased pulmonary endothelial fibrosis in response to hypoxia. This is Homeobox protein Nkx-2.5 (Nkx2-5) from Rattus norvegicus (Rat).